A 180-amino-acid chain; its full sequence is Probable DNA-directed RNA polymerase subunit delta (180 aa).

The 68-residue stretch at 14–81 (LSMIEVARAI…GHNVWALRSW (68 aa)) folds into the HTH HARE-type domain. The tract at residues 89–180 (EEVNHPEDEE…HQDDLDDDDE (92 aa)) is disordered. The span at 115 to 163 (DSDDDDIIDYDSDDPEDEDLDVDEEDTNEDDYSDDDLDDADDNELDDGI) shows a compositional bias: acidic residues.

Belongs to the RpoE family. RNAP is composed of a core of 2 alpha, a beta and a beta' subunits. The core is associated with a delta subunit and one of several sigma factors.

Its function is as follows. Participates in both the initiation and recycling phases of transcription. In the presence of the delta subunit, RNAP displays an increased specificity of transcription, a decreased affinity for nucleic acids, and an increased efficiency of RNA synthesis because of enhanced recycling. The chain is Probable DNA-directed RNA polymerase subunit delta from Lactobacillus johnsonii (strain CNCM I-12250 / La1 / NCC 533).